The sequence spans 1140 residues: uncharacterized protein (1140 aa).

Disordered regions lie at residues 1–49 (MGSS…TSPE), 97–243 (SSDI…STIS), 280–427 (TSSS…KSSV), 512–541 (ASST…DLSK), 702–747 (FSTP…STAS), 916–1059 (CPEK…PIGR), and 1080–1103 (LSSS…GTSS). The span at 105-129 (VNDVESSTSGPSNSYSALSSTNAQL) shows a compositional bias: polar residues. Composition is skewed to low complexity over residues 130 to 154 (SSST…TSSS), 172 to 214 (TTAS…TTSD), and 221 to 243 (SSST…STIS). Positions 516 to 528 (LGSKVSSSNSRMA) are enriched in polar residues. Low complexity-rich tracts occupy residues 529–541 (TSKT…DLSK) and 703–718 (STPE…VTSE). Positions 719-733 (APSTVSSMTTSAPFI) are enriched in polar residues. Positions 734-747 (NNSTSARPSPSTAS) are enriched in low complexity. Basic and acidic residues predominate over residues 949–961 (SFKDMKTSQETKK). The span at 977–997 (EKTSPTTKASPSTSPSESKAA) shows a compositional bias: low complexity. Polar residues-rich tracts occupy residues 998–1023 (GNTS…STSV), 1031–1055 (TKNS…STES), and 1089–1103 (RSTT…GTSS).

This is an uncharacterized protein from Saccharomyces cerevisiae (strain ATCC 204508 / S288c) (Baker's yeast).